Here is a 427-residue protein sequence, read N- to C-terminus: MLISTFIISSLLSIALANPIPSRGGTQFYKRGDYWDYQNDKIRGVNLGGWFVLEPFITPSLFEAFENQGQDVPVDEYHYTKALGKDLAKERLDQHWSSWIVEADFQSIAGAGLNFVRIPIGYWAFQLLDNDPYVQGQESYLDQALEWAKKYDIKVWIDLHGAPGSQNGFDNSGLRDSYEFQNGDNTQVALDVLQYISNKYGGSDYGDVVIGIELLNEPLGSVLDMGKLNDFWQQGYHNLRNTGSSQNVIIHDAFQTWDSFNDKFHTPDYWNVVIDHHHYQVFSPGELSRSVDEHVKVACEWGANSTKENHWNLCGEWSAAMTDCTKWLNGVGRGSRYDQTFDYDPSQNQNYIGSCQGSQDISTWDDDKKSNYRRYIEAQLDAFEKRSGWIFWTWKTETTLEWDFQKLSYYGIFPSPLTSRQYPGQCD.

An N-terminal signal peptide occupies residues 1–17 (MLISTFIISSLLSIALA). E217 serves as the catalytic Proton donor. 2 disulfides stabilise this stretch: C299–C426 and C324–C355. The active-site Nucleophile is E316.

The protein belongs to the glycosyl hydrolase 5 (cellulase A) family.

Its subcellular location is the secreted. It catalyses the reaction Successive hydrolysis of beta-D-glucose units from the non-reducing ends of (1-&gt;3)-beta-D-glucans, releasing alpha-glucose.. Beta-glucanases participate in the metabolism of beta-glucan, the main structural component of the cell wall. It could also function biosynthetically as a transglycosylase. The polypeptide is Glucan 1,3-beta-glucosidase 2 (EXG2) (Wickerhamomyces anomalus (Yeast)).